We begin with the raw amino-acid sequence, 110 residues long: Snake venom vascular endothelial growth factor toxin (110 aa).

Q1 is modified (pyrrolidone carboxylic acid). Intrachain disulfides connect C14–C56, C45–C91, and C49–C93.

The protein belongs to the PDGF/VEGF growth factor family. Snake venom VEGF subfamily. Homodimer; disulfide-linked. In terms of tissue distribution, expressed by the venom gland.

The protein resides in the secreted. Snake venom VEGFs that may contribute to venom dispersion and prey subjugation by inducing vascular permeability and hypotension. This protein potently stimulates dermal human microvascular endothelial cell (dHMVEC) proliferation in a VEGFR-2 dependent manner. This stimulatory effect is correlated with activation of the MAPK Erk1/2 signaling pathway. It also appears to be a chemoattractant for migration of these cells and stimulates their radial migration in a collagen gel. In vivo, it induces angiogenesis in a Japanese quail assay. This pro-angiogenic effect may also be related to its interaction with VEGFR-2. In addition, it may induce an increase in capillary permeability after intradermal injection, as well as a drastic hypotensive effect after intravenous injection. The hypotension is mediated by nitric oxide (NO), which is produced by VEGF-activated endothelium NO synthase. The chain is Snake venom vascular endothelial growth factor toxin from Daboia palaestinae (Palestine viper).